A 539-amino-acid polypeptide reads, in one-letter code: MIO-dependent tyrosine 2,3-aminomutase (539 aa).

Tyr63 acts as the Proton donor/acceptor in catalysis. Residue His93 participates in substrate binding. A cross-link (5-imidazolinone (Ala-Gly)) is located at residues Ala152–Gly154. Ser153 bears the 2,3-didehydroalanine (Ser) mark. Positions 205 and 311 each coordinate substrate.

The protein belongs to the TAL/TAM family. As to quaternary structure, homotetramer; dimer of dimers. Post-translationally, contains an active site 4-methylidene-imidazol-5-one (MIO), which is formed autocatalytically by cyclization and dehydration of residues Ala-Ser-Gly.

It catalyses the reaction L-tyrosine = 3-amino-3-(4-hydroxyphenyl)propanoate. It carries out the reaction L-tyrosine = (E)-4-coumarate + NH4(+). Its function is as follows. Involved in the biosynthesis of the enediyne antitumor antibiotic C-1027. Catalyzes the MIO-dependent deamination of L-tyrosine generating the corresponding alpha,beta-unsaturated acid, (S)-beta-tyrosine. In Streptomyces globisporus, this protein is MIO-dependent tyrosine 2,3-aminomutase.